We begin with the raw amino-acid sequence, 31 residues long: Photosystem II reaction center protein T (31 aa).

The chain crosses the membrane as a helical span at residues Ala3–Phe23.

The protein belongs to the PsbT family. As to quaternary structure, PSII is composed of 1 copy each of membrane proteins PsbA, PsbB, PsbC, PsbD, PsbE, PsbF, PsbH, PsbI, PsbJ, PsbK, PsbL, PsbM, PsbT, PsbX, PsbY, PsbZ, Psb30/Ycf12, at least 3 peripheral proteins of the oxygen-evolving complex and a large number of cofactors. It forms dimeric complexes.

The protein resides in the plastid. It localises to the chloroplast thylakoid membrane. Found at the monomer-monomer interface of the photosystem II (PS II) dimer, plays a role in assembly and dimerization of PSII. PSII is a light-driven water plastoquinone oxidoreductase, using light energy to abstract electrons from H(2)O, generating a proton gradient subsequently used for ATP formation. The protein is Photosystem II reaction center protein T of Pyropia yezoensis (Susabi-nori).